The primary structure comprises 575 residues: E3 ubiquitin-protein ligase kcmf-1 (575 aa).

The ZZ-type zinc finger occupies 9–73 (HEGVSCDGCA…PMQLILSSVD (65 aa)). Positions 14, 17, 29, 32, 38, 41, 59, and 63 each coordinate Zn(2+). Disordered regions lie at residues 277-306 (PIYP…DDND) and 530-575 (EADE…INID). Acidic residues-rich tracts occupy residues 297-306 (SADESEDDND) and 530-563 (EADE…ENDS).

It belongs to the KCMF1 family.

Its subcellular location is the cytoplasm. It localises to the late endosome. The protein localises to the lysosome. It carries out the reaction S-ubiquitinyl-[E2 ubiquitin-conjugating enzyme]-L-cysteine + [acceptor protein]-L-lysine = [E2 ubiquitin-conjugating enzyme]-L-cysteine + N(6)-ubiquitinyl-[acceptor protein]-L-lysine.. Its pathway is protein modification; protein ubiquitination. E3 ubiquitin-protein ligase which accepts ubiquitin from an E2 ubiquitin-conjugating enzyme and then transfers it to targeted substrates, promoting their degradation by the proteasome. This Caenorhabditis elegans protein is E3 ubiquitin-protein ligase kcmf-1.